A 589-amino-acid chain; its full sequence is Serine/threonine-protein phosphatase 2A 65 kDa regulatory subunit A alpha isoform (589 aa).

Residue A2 is modified to N-acetylalanine. HEAT repeat units follow at residues 8–46 (DSLY…GVER), 47–84 (TRSE…GGPE), 85–123 (YVHC…SPSD), 124–161 (LEAH…VSSA), 162–200 (VKAE…ELDN), 201–239 (VKSE…PQED), 240–278 (LEAL…GPEI), 279–321 (TKTD…RENV), 322–360 (IMTQ…GKDS), 361–399 (TIEH…GIRQ), 400–438 (LSQS…GVEF), 439–477 (FDEK…GKEW), 478–516 (AHAT…GQDI), 517–555 (TTKH…DNST), and 556–589 (LQSE…LSLA). Residues 8–399 (DSLYPIAVLI…CVNEVIGIRQ (392 aa)) form a PP2A subunit B binding region. A polyoma small and medium T antigens Binding region spans residues 47–321 (TRSELLPFLT…NLSADCRENV (275 aa)). The tract at residues 85–239 (YVHCLLPPLE…NIAQLLPQED (155 aa)) is SV40 small T antigen binding. An N6-acetyllysine modification is found at K280. Residues 400–589 (LSQSLLPAIV…QEALTVLSLA (190 aa)) are PP2A subunit C binding.

Belongs to the phosphatase 2A regulatory subunit A family. PP2A consists of a common heterodimeric core enzyme, composed of PPP2CA a 36 kDa catalytic subunit (subunit C) and PPP2R1A a 65 kDa constant regulatory subunit (PR65 or subunit A), that associates with a variety of regulatory subunits. Proteins that associate with the core dimer include three families of regulatory subunits B (the R2/B/PR55/B55, R3/B''/PR72/PR130/PR59 and R5/B'/B56 families), the 48 kDa variable regulatory subunit, viral proteins, and cell signaling molecules. Found in a complex with at least ARL2, PPP2CB, PPP2R1A, PPP2R2A, PPP2R5E and TBCD. Interacts with the PP2A C catalytic subunit PPP2CA. Interacts with the PP2A B subunit PPP2R2A. Interacts with the PP2A B subunit PPP2R5D. Interacts with FOXO1; the interaction dephosphorylates FOXO1 on AKT-mediated phosphorylation sites. Interacts with IPO9. Interacts with TP53 and SGO1. Interacts with PLA2G16; this interaction might decrease PP2A activity. Interacts with CTTNBP2NL. Interacts with GNA12; the interaction promotes protein phosphatase 2A activation causing dephosphorylation of MAPT. Interacts with CIP2A; this interaction stabilizes CIP2A. Interacts with PABIR1/FAM122A. Interacts with ADCY8; antagonizes interaction between ADCY8 and calmodulin. Interacts with CRTC3 (when phosphorylated at 'Ser-391'). Interacts with SPRY2. Part of the core of STRIPAK complexes composed of PP2A catalytic and scaffolding subunits, the striatins (PP2A regulatory subunits), the striatin-associated proteins MOB4, STRIP1 and STRIP2, PDCD10 and members of the STE20 kinases, such as STK24 and STK26. Component of the Integrator-PP2A (INTAC) complex, composed of the Integrator core complex and protein phosphatase 2A subunits PPP2CA and PPP2R1A.

The protein resides in the cytoplasm. The protein localises to the nucleus. It is found in the chromosome. It localises to the centromere. Its subcellular location is the lateral cell membrane. The protein resides in the cell projection. The protein localises to the dendrite. Its function is as follows. The PR65 subunit of protein phosphatase 2A serves as a scaffolding molecule to coordinate the assembly of the catalytic subunit and a variable regulatory B subunit. Upon interaction with GNA12 promotes dephosphorylation of microtubule associated protein TAU/MAPT. Required for proper chromosome segregation and for centromeric localization of SGO1 in mitosis. Together with RACK1 adapter, mediates dephosphorylation of AKT1 at 'Ser-473', preventing AKT1 activation and AKT-mTOR signaling pathway. Dephosphorylation of AKT1 is essential for regulatory T-cells (Treg) homeostasis and stability. Part of the striatin-interacting phosphatase and kinase (STRIPAK) complexes. STRIPAK complexes have critical roles in protein (de)phosphorylation and are regulators of multiple signaling pathways including Hippo, MAPK, nuclear receptor and cytoskeleton remodeling. Different types of STRIPAK complexes are involved in a variety of biological processes such as cell growth, differentiation, apoptosis, metabolism and immune regulation. Key mediator of a quality checkpoint during transcription elongation as part of the Integrator-PP2A (INTAC) complex. The INTAC complex drives premature transcription termination of transcripts that are unfavorably configured for transcriptional elongation: within the INTAC complex, acts as a scaffolding subunit for PPP2CA, which catalyzes dephosphorylation of the C-terminal domain (CTD) of Pol II subunit POLR2A/RPB1 and SUPT5H/SPT5, thereby preventing transcriptional elongation. Regulates the recruitment of the SKA complex to kinetochores. This Bos taurus (Bovine) protein is Serine/threonine-protein phosphatase 2A 65 kDa regulatory subunit A alpha isoform (PPP2R1A).